A 640-amino-acid chain; its full sequence is DNA topoisomerase 3 (640 aa).

In terms of domain architecture, Toprim spans 21–175; the sequence is RVLCVAEKNS…WRAQFSHLEP (155 aa). Mg(2+) is bound by residues Glu-27, Asp-137, and Asp-139. In terms of domain architecture, Topo IA-type catalytic spans 189 to 618; the sequence is DMKLVAAVEC…QLLPLYKEAF (430 aa). Residue Tyr-354 is the O-(5'-phospho-DNA)-tyrosine intermediate of the active site.

It belongs to the type IA topoisomerase family. Requires Mg(2+) as cofactor.

It carries out the reaction ATP-independent breakage of single-stranded DNA, followed by passage and rejoining.. In terms of biological role, introduces a single-strand break via transesterification at a target site in duplex DNA. Releases the supercoiling and torsional tension of DNA introduced during the DNA replication and transcription by transiently cleaving and rejoining one strand of the DNA duplex. The scissile phosphodiester is attacked by the catalytic tyrosine of the enzyme, resulting in the formation of a DNA-(5'-phosphotyrosyl)-enzyme intermediate and the expulsion of a 3'-OH DNA strand. The protein is DNA topoisomerase 3 (TOP3) of Candidozyma auris (Yeast).